Here is a 228-residue protein sequence, read N- to C-terminus: RNA-free ribonuclease P (228 aa).

The protein belongs to the HARP family.

It carries out the reaction Endonucleolytic cleavage of RNA, removing 5'-extranucleotides from tRNA precursor.. Functionally, RNA-free RNase P that catalyzes the removal of the 5'-leader sequence from pre-tRNA to produce the mature 5'-terminus. This is RNA-free ribonuclease P from Methanopyrus kandleri (strain AV19 / DSM 6324 / JCM 9639 / NBRC 100938).